The following is a 794-amino-acid chain: Protein sel-1 homolog 1 (794 aa).

A signal peptide spans 1–21; that stretch reads MQVHVGLTLLLCAVLLSSATA. The interval 20 to 91 is disordered; that stretch reads TASSDDESNQ…EEEVSVGEEI (72 aa). Residues 22–737 form an interaction with ERLEC1, OS9 and SYVN1 region; the sequence is SSDDESNQDE…DIFTQLDMDQ (716 aa). Topologically, residues 22-738 are lumenal; the sequence is SSDDESNQDE…IFTQLDMDQL (717 aa). Acidic residues-rich tracts occupy residues 23–32 and 62–77; these read SDDESNQDES and DSED…EEEE. Phosphoserine is present on Ser-63. One can recognise a Fibronectin type-II domain in the interval 122-170; the sequence is AHGEPCHFPFLFLDKEYDECTSDGRQDGRLWCATTYDYKTDEKWGFCET. 2 disulfides stabilise this stretch: Cys-127-Cys-153 and Cys-141-Cys-168. Sel1-like repeat units follow at residues 183–218, 219–254, 255–290, 291–326, 373–409, 410–446, 447–482, 483–518, and 519–554; these read AEMI…GMNH, TKAL…EEGS, PKGQ…LGGN, LIAH…NHVA, VQAQ…NAGN, SHAM…DMGN, PVGQ…EQGW, VDGQ…QGGH, and ILAF…ERGR. Asn-195 and Asn-217 each carry an N-linked (GlcNAc...) asparagine glycan. An N-linked (GlcNAc...) asparagine glycan is attached at Asn-272. The important for homodimerization and oligomerization stretch occupies residues 352-537; it reads NSGMLEEDLI…MHASGTGVMR (186 aa). A glycan (N-linked (GlcNAc...) asparagine) is linked at Asn-431. An N-linked (GlcNAc...) asparagine glycan is attached at Asn-608. 2 Sel1-like repeats span residues 627-662 and 664-699; these read TVAR…EQQH and AQAM…EASP. Residues 643–723 are interaction with SYVN1; sequence TDVDYETAFI…VVYFLQYIRE (81 aa). A mediates retention in the endoplasmic reticulum region spans residues 738 to 794; sequence LLGPEWDLYLMTIIALLLGTVIAYRQRQHQDVPVPRPPGPWPAPPQQEGPPEQQPPQ. A helical transmembrane segment spans residues 739–759; the sequence is LGPEWDLYLMTIIALLLGTVI. The Cytoplasmic segment spans residues 760-794; that stretch reads AYRQRQHQDVPVPRPPGPWPAPPQQEGPPEQQPPQ. The interval 768 to 794 is disordered; the sequence is DVPVPRPPGPWPAPPQQEGPPEQQPPQ. The span at 771-794 shows a compositional bias: pro residues; that stretch reads VPRPPGPWPAPPQQEGPPEQQPPQ.

The protein belongs to the sel-1 family. As to quaternary structure, homodimer and homooligomer. May form a complex with ERLEC1, HSPA5, OS9, and SYVN1. Interacts with FOXRED2 and EDEM1. Interacts with LPL and LMF1; may stabilize the complex formed by LPL and LMF1 and thereby promote the export of LPL dimers. Component of the HRD1 complex, which comprises at least SYNV1/HRD1, DERL1/2, FAM8A1, HERPUD1/HERP, OS9, SEL1L and UBE2J1. SYNV1 assembles with SEL1L and FAM8A1 through its transmembrane domains, but interaction with its cytoplasmic domain is required to confer stability to FAM8A1 and enhance recruitment of HERPUD1. The interaction with SYNV1/HRD1 is direct. In terms of processing, N-glycosylated.

The protein localises to the endoplasmic reticulum membrane. In terms of biological role, plays a role in the endoplasmic reticulum quality control (ERQC) system also called ER-associated degradation (ERAD) involved in ubiquitin-dependent degradation of misfolded endoplasmic reticulum proteins. Enhances SYVN1 stability. Plays a role in LPL maturation and secretion. Required for normal differentiation of the pancreas epithelium, and for normal exocrine function and survival of pancreatic cells. May play a role in Notch signaling. This is Protein sel-1 homolog 1 (Sel1l) from Mesocricetus auratus (Golden hamster).